Consider the following 425-residue polypeptide: Ribulose bisphosphate carboxylase/oxygenase activase B, chloroplastic (425 aa).

A chloroplast-targeting transit peptide spans 1–43; the sequence is MASAFSSTVGAPASTPTIFLGKKVKNYYHGGNKMKSRVVRVMA. 153–160 contacts ATP; the sequence is GGKGQGKS.

The protein belongs to the RuBisCO activase family.

The protein resides in the plastid. It localises to the chloroplast stroma. In terms of biological role, activation of RuBisCO (ribulose-1,5-bisphosphate carboxylase/oxygenase; EC 4.1.1.39) involves the ATP-dependent carboxylation of the epsilon-amino group of lysine leading to a carbamate structure. This is Ribulose bisphosphate carboxylase/oxygenase activase B, chloroplastic (RCAB) from Hordeum vulgare (Barley).